The sequence spans 434 residues: Probable glucuronosyltransferase Os02g0520750 (434 aa).

The Cytoplasmic segment spans residues 1 to 10; the sequence is MVGARAGRVP. A helical; Signal-anchor for type II membrane protein transmembrane segment spans residues 11 to 31; the sequence is AAAAAAAAVLIVAACVFSSLA. The Lumenal portion of the chain corresponds to 32 to 434; the sequence is GAAAAAEVVG…GPVADLKPWK (403 aa). N-linked (GlcNAc...) asparagine glycosylation is found at Asn160 and Asn421.

Belongs to the glycosyltransferase 47 family.

The protein localises to the golgi apparatus membrane. Involved in the synthesis of glucuronoxylan hemicellulose in secondary cell walls. In Oryza sativa subsp. japonica (Rice), this protein is Probable glucuronosyltransferase Os02g0520750.